Reading from the N-terminus, the 251-residue chain is Cell division protein ZapD (251 aa).

It belongs to the ZapD family. In terms of assembly, interacts with FtsZ.

Its subcellular location is the cytoplasm. Functionally, cell division factor that enhances FtsZ-ring assembly. Directly interacts with FtsZ and promotes bundling of FtsZ protofilaments, with a reduction in FtsZ GTPase activity. This Paraburkholderia xenovorans (strain LB400) protein is Cell division protein ZapD.